The sequence spans 192 residues: MAMPDLTHDLTGKLLIAMPGMEDPRFAGAVIFLCVHSPGQAMGLIINKPMEEITFTELMEQLDIPKRGSTPQVPVCFGGPVDMRRGFVLHSPDYAPRGEEALRIDHRFAMTGTLDILEDIAAGRGPKRSLLALGYAGWGEGQLEAEIARNDWLTADATPELVFDHKMERKWDAAVQSLGFDPLMLSSEAGHA.

The protein belongs to the UPF0301 (AlgH) family.

This is UPF0301 protein Jann_3896 from Jannaschia sp. (strain CCS1).